Consider the following 151-residue polypeptide: UPF0208 membrane protein KPN78578_26420 (151 aa).

2 consecutive transmembrane segments (helical) span residues 46–65 (YAIRIMPPIAIFTLCWQIAL) and 69–91 (LGPAVATALFALSLPMQGLWWLG).

This sequence belongs to the UPF0208 family.

It localises to the cell inner membrane. This is UPF0208 membrane protein KPN78578_26420 from Klebsiella pneumoniae subsp. pneumoniae (strain ATCC 700721 / MGH 78578).